The sequence spans 396 residues: Elongation factor Tu (396 aa).

A tr-type G domain is found at 11-205; that stretch reads KPHVNIGTIG…TVDEYIPTPE (195 aa). Residues 20 to 27 form a G1 region; sequence GHVDHGKT. 20-27 is a binding site for GTP; it reads GHVDHGKT. Thr-27 serves as a coordination point for Mg(2+). The tract at residues 61–65 is G2; it reads GITIN. Residues 82 to 85 form a G3 region; sequence DAPG. GTP-binding positions include 82–86 and 137–140; these read DAPGH and NKVD. Positions 137–140 are G4; it reads NKVD. A G5 region spans residues 175–177; the sequence is SAL.

Belongs to the TRAFAC class translation factor GTPase superfamily. Classic translation factor GTPase family. EF-Tu/EF-1A subfamily. Monomer.

It localises to the cytoplasm. It carries out the reaction GTP + H2O = GDP + phosphate + H(+). GTP hydrolase that promotes the GTP-dependent binding of aminoacyl-tRNA to the A-site of ribosomes during protein biosynthesis. This chain is Elongation factor Tu, found in Lactobacillus gasseri (strain ATCC 33323 / DSM 20243 / BCRC 14619 / CIP 102991 / JCM 1131 / KCTC 3163 / NCIMB 11718 / NCTC 13722 / AM63).